Reading from the N-terminus, the 201-residue chain is MTDQGENEKKQRRSNATIAVACLSFFVCMIGAAYASVPLYRIFCQVTGYGGTTQRVEQYSDTILDKTIKVRFDANIANGLPWDFKPMQREVTVRIGETTMIKYEAHNLFGEETYGRASFNVAPGRAGAYFNKVECFCFTDNTLKPGEDLELPVVFFVDPEFVNDPDLKDVKTITLSYTFFPIDKPRPVVNAKAVGSTRNGG.

Topologically, residues methionine 1–arginine 12 are cytoplasmic. A helical; Signal-anchor for type II membrane protein membrane pass occupies residues arginine 13 to alanine 35. Over serine 36–glycine 201 the chain is Periplasmic.

Belongs to the COX11/CtaG family.

Its subcellular location is the cell inner membrane. Its function is as follows. Exerts its effect at some terminal stage of cytochrome c oxidase synthesis, probably by being involved in the insertion of the copper B into subunit I. The protein is Cytochrome c oxidase assembly protein CtaG of Brucella suis biovar 1 (strain 1330).